The following is a 58-amino-acid chain: uncharacterized protein (58 aa).

A run of 2 helical transmembrane segments spans residues 7–27 (IFDIVMYIIFGVLSLFLVAKT) and 29–49 (YGTGVLVFVAILYLAVIAYKI).

The protein localises to the cell membrane. This is an uncharacterized protein from Bacillus subtilis (strain 168).